The sequence spans 330 residues: Zinc finger protein Gfi-1b (330 aa).

Positions 1-20 (MPRSFLVKSKKAHTYHQPRA) are SNAG domain. 2 disordered regions span residues 1-21 (MPRS…PRAQ) and 75-99 (MASA…SESP). At Lys-8 the chain carries N6,N6-dimethyllysine. The segment at 91-330 (GESPLSESPP…RHRESQHNLK (240 aa)) is interaction with ARIH2. 6 consecutive C2H2-type zinc fingers follow at residues 163 to 186 (YHCV…RRSH), 192 to 214 (FACD…THVH), 220 to 242 (FECR…LLIH), 248 to 270 (YPCQ…TYIH), 276 to 298 (HKCQ…SRKH), and 304 to 327 (FSCE…ESQH). The mediates interaction with GATA1 stretch occupies residues 164–330 (HCVKCNKVFS…RHRESQHNLK (167 aa)).

As to quaternary structure, interacts with histone methyltransferases EHMT2 and SUV39H1. Interacts with ARIH2 (via RING-type 2) and with RUNX1T1. Forms a complex with GATA1. Component of a RCOR-GFI-KDM1A-HDAC complex. Interacts directly with RCOR1, KDM1A and HDAC2. Methylation at Lys-8 in the SNAG domain seems required for the recruitment of the corepressor complex. Expressed in bone marrow and in spleen. Detected in hematopoietic stem cells, erythroblasts, and megakaryocytes. Expressed in thymocytes.

It localises to the nucleus. Essential proto-oncogenic transcriptional regulator necessary for development and differentiation of erythroid and megakaryocytic lineages. Component of a RCOR-GFI-KDM1A-HDAC complex that suppresses, via histone deacetylase (HDAC) recruitment, a number of genes implicated in multilineage blood cell development and controls hematopoietic differentiation. Transcriptional repressor or activator depending on both promoter and cell type context; represses promoter activity of SOCS1 and SOCS3 and thus, may regulate cytokine signaling pathways. Cooperates with GATA1 to repress target gene transcription, such as the apoptosis regulator BCL2L1; GFI1B silencing in leukemic cell lines markedly increase apoptosis rate. Inhibits down-regulation of MYC and MYB as well as the cyclin-dependent kinase inhibitor CDKN1A/P21WAF1 in IL6-treated myelomonocytic cells. Represses expression of GATA3 in T-cell lymphomas and inhibits GATA1-mediated transcription; as GATA1 also mediates erythroid GFI1B transcription, both GATA1 and GFI1B participate in a feedback regulatory pathway controlling the expression of GFI1B gene in erythroid cells. Suppresses GATA1-mediated stimulation of GFI1B promoter through protein interaction. Binds to gamma-satellite DNA and to its own promoter, auto-repressing its own expression. Alters histone methylation by recruiting histone methyltransferase to target genes promoters. Plays a role in heterochromatin formation. The protein is Zinc finger protein Gfi-1b (Gfi1b) of Mus musculus (Mouse).